The chain runs to 253 residues: 2-C-methyl-D-erythritol 4-phosphate cytidylyltransferase (253 aa).

This sequence belongs to the IspD/TarI cytidylyltransferase family. IspD subfamily.

The enzyme catalyses 2-C-methyl-D-erythritol 4-phosphate + CTP + H(+) = 4-CDP-2-C-methyl-D-erythritol + diphosphate. It participates in isoprenoid biosynthesis; isopentenyl diphosphate biosynthesis via DXP pathway; isopentenyl diphosphate from 1-deoxy-D-xylulose 5-phosphate: step 2/6. Catalyzes the formation of 4-diphosphocytidyl-2-C-methyl-D-erythritol from CTP and 2-C-methyl-D-erythritol 4-phosphate (MEP). The chain is 2-C-methyl-D-erythritol 4-phosphate cytidylyltransferase from Idiomarina loihiensis (strain ATCC BAA-735 / DSM 15497 / L2-TR).